A 116-amino-acid chain; its full sequence is Protein Rev (116 aa).

The residue at position 8 (Ser-8) is a Phosphoserine; by host CK2. Residues 18–26 (LIKSLYQSN) are homomultimerization. Disordered regions lie at residues 20–46 (KSLYQSNPPPSPEGTRQARRNRRRRWR) and 84–116 (DSSEDCGTSGTQGVGSPQVLVESPAVLESGAKE). The Nuclear localization signal and RNA-binding (RRE) signature appears at 34-50 (TRQARRNRRRRWRERQR). Residues 36 to 46 (QARRNRRRRWR) show a composition bias toward basic residues. The short motif at 73–84 (LQLPPLERLTLD) is the Nuclear export signal and binding to XPO1 element. Over residues 88 to 98 (DCGTSGTQGVG) the composition is skewed to polar residues. Ser-92 and Ser-99 each carry phosphoserine; by host.

The protein belongs to the HIV-1 REV protein family. Homomultimer; when bound to the RRE. Multimeric assembly is essential for activity and may involve XPO1. Binds to human KPNB1, XPO1, TNPO1, RANBP5 and IPO7. Interacts with the viral Integrase. Interacts with human KHDRBS1. Interacts with human NAP1; this interaction decreases Rev multimerization and stimulates its activity. Interacts with human DEAD-box helicases DDX3 and DDX24; these interactions may serve for viral RNA export to the cytoplasm and packaging, respectively. Interacts with human PSIP1; this interaction may inhibit HIV-1 DNA integration by promoting dissociation of the Integrase-LEDGF/p75 complex. In terms of processing, asymmetrically arginine dimethylated at one site by host PRMT6. Methylation impairs the RNA-binding activity and export of viral RNA from the nucleus to the cytoplasm. Phosphorylated by protein kinase CK2. Presence of, and maybe binding to the N-terminus of the regulatory beta subunit of CK2 is necessary for CK2-mediated Rev's phosphorylation.

It localises to the host nucleus. It is found in the host nucleolus. Its subcellular location is the host cytoplasm. Its function is as follows. Escorts unspliced or incompletely spliced viral pre-mRNAs (late transcripts) out of the nucleus of infected cells. These pre-mRNAs carry a recognition sequence called Rev responsive element (RRE) located in the env gene, that is not present in fully spliced viral mRNAs (early transcripts). This function is essential since most viral proteins are translated from unspliced or partially spliced pre-mRNAs which cannot exit the nucleus by the pathway used by fully processed cellular mRNAs. Rev itself is translated from a fully spliced mRNA that readily exits the nucleus. Rev's nuclear localization signal (NLS) binds directly to KPNB1/Importin beta-1 without previous binding to KPNA1/Importin alpha-1. KPNB1 binds to the GDP bound form of RAN (Ran-GDP) and targets Rev to the nucleus. In the nucleus, the conversion from Ran-GDP to Ran-GTP dissociates Rev from KPNB1 and allows Rev's binding to the RRE in viral pre-mRNAs. Rev multimerization on the RRE via cooperative assembly exposes its nuclear export signal (NES) to the surface. Rev can then form a complex with XPO1/CRM1 and Ran-GTP, leading to nuclear export of the complex. Conversion from Ran-GTP to Ran-GDP mediates dissociation of the Rev/RRE/XPO1/RAN complex, so that Rev can return to the nucleus for a subsequent round of export. Beside KPNB1, also seems to interact with TNPO1/Transportin-1, RANBP5/IPO5 and IPO7/RANBP7 for nuclear import. The nucleoporin-like HRB/RIP is an essential cofactor that probably indirectly interacts with Rev to release HIV RNAs from the perinuclear region to the cytoplasm. In Human immunodeficiency virus type 1 group M subtype B (isolate RF/HAT3) (HIV-1), this protein is Protein Rev.